We begin with the raw amino-acid sequence, 61 residues long: Furostanol glycoside 26-O-beta-glucosidase (61 aa).

Residue aspartate 33 is the Proton donor/acceptor of the active site. Aspartate 33 lines the D-glucose pocket.

The protein belongs to the glycosyl hydrolase 3 family. As to quaternary structure, monomer. Glycosylated. Expressed in petioles and leaves, but not in fruits.

It carries out the reaction protodioscin + H2O = 26-deglucoprotodioscin + D-glucose. Inhibited by Hg(2+) and D-glucono-1,5-lactone. Its function is as follows. Beta-glucosidase highly specific for the cleavage of C-26-bound glucose moiety of furostanol glycosides torvosides A and H. Hydrolyzes only p-nitrophenyl-beta-glucoside, but not p-nitrophenyl-beta-D-fucoside, p-nitrophenyl-beta-L-fucoside, p-nitrophenyl-beta-D-xyloside, p-nitrophenyl-beta-D-galactoside, p-nitrophenyl-beta-D-NAc-glucosamine, p-nitrophenyl-beta-D-mannoside or any of the p-nitrophenyl-alpha-glycosides tested. In Solanum torvum (Turkey berry), this protein is Furostanol glycoside 26-O-beta-glucosidase.